The primary structure comprises 195 residues: dITP/XTP pyrophosphatase (195 aa).

Threonine 8–lysine 13 lines the substrate pocket. Positions 39 and 68 each coordinate Mg(2+). Aspartate 68 (proton acceptor) is an active-site residue. Substrate is bound by residues serine 69, phenylalanine 149–aspartate 152, lysine 172, and histidine 177–arginine 178.

It belongs to the HAM1 NTPase family. As to quaternary structure, homodimer. It depends on Mg(2+) as a cofactor.

It catalyses the reaction XTP + H2O = XMP + diphosphate + H(+). The enzyme catalyses dITP + H2O = dIMP + diphosphate + H(+). The catalysed reaction is ITP + H2O = IMP + diphosphate + H(+). Pyrophosphatase that catalyzes the hydrolysis of nucleoside triphosphates to their monophosphate derivatives, with a high preference for the non-canonical purine nucleotides XTP (xanthosine triphosphate), dITP (deoxyinosine triphosphate) and ITP. Seems to function as a house-cleaning enzyme that removes non-canonical purine nucleotides from the nucleotide pool, thus preventing their incorporation into DNA/RNA and avoiding chromosomal lesions. The chain is dITP/XTP pyrophosphatase from Staphylococcus epidermidis (strain ATCC 35984 / DSM 28319 / BCRC 17069 / CCUG 31568 / BM 3577 / RP62A).